We begin with the raw amino-acid sequence, 233 residues long: Eukaryotic translation initiation factor 3 subunit G (233 aa).

Residues proline 152–lysine 229 form the RRM domain.

This sequence belongs to the eIF-3 subunit G family. In terms of assembly, component of the eukaryotic translation initiation factor 3 (eIF-3) complex.

The protein localises to the cytoplasm. Its function is as follows. RNA-binding component of the eukaryotic translation initiation factor 3 (eIF-3) complex, which is involved in protein synthesis of a specialized repertoire of mRNAs and, together with other initiation factors, stimulates binding of mRNA and methionyl-tRNAi to the 40S ribosome. The eIF-3 complex specifically targets and initiates translation of a subset of mRNAs involved in cell proliferation. This subunit can bind 18S rRNA. The polypeptide is Eukaryotic translation initiation factor 3 subunit G (eif3G) (Dictyostelium discoideum (Social amoeba)).